Consider the following 494-residue polypeptide: Fumigaclavine B O-acetyltransferase easN (494 aa).

This sequence belongs to the fumigaclavine B O-acetyltransferase family. As to quaternary structure, monomer.

It carries out the reaction fumigaclavine B + acetyl-CoA = fumigaclavine A + CoA. Its pathway is alkaloid biosynthesis; ergot alkaloid biosynthesis. In terms of biological role, fumigaclavine B O-acetyltransferase; part of the gene cluster that mediates the biosynthesis of fumiclavanine C, a fungal ergot alkaloid. DmaW catalyzes the first step of ergot alkaloid biosynthesis by condensing dimethylallyl diphosphate (DMAP) and tryptophan to form 4-dimethylallyl-L-tryptophan. The second step is catalyzed by the methyltransferase easF that methylates 4-dimethylallyl-L-tryptophan in the presence of S-adenosyl-L-methionine, resulting in the formation of 4-dimethylallyl-L-abrine. The catalase easC and the FAD-dependent oxidoreductase easE then transform 4-dimethylallyl-L-abrine to chanoclavine-I which is further oxidized by EasD in the presence of NAD(+), resulting in the formation of chanoclavine-I aldehyde. EasA reduces chanoclavine-I aldehyde to dihydrochanoclavine-I aldehyde that spontaneously dehydrates to form 6,8-dimethyl-6,7-didehydroergoline. EasG then catalyzes the reduction of 6,8-dimethyl-6,7-didehydroergoline to form festuclavine. Hydrolysis of festuclavine by easM then leads to the formation of fumigaclavine B which is in turn acetylated by easN to fumigaclavine A. Finally, easL catalyzes the conversion of fumigaclavine A into fumigaclavine C by attaching a dimethylallyl moiety to C-2 of the indole nucleus. The sequence is that of Fumigaclavine B O-acetyltransferase easN from Aspergillus fumigatus (strain ATCC MYA-4609 / CBS 101355 / FGSC A1100 / Af293) (Neosartorya fumigata).